The primary structure comprises 211 residues: Thioredoxin domain-containing protein 9 homolog (211 aa).

The 111-residue stretch at 68–178 (YSEIHSEKDF…LEERIARAQV (111 aa)) folds into the Thioredoxin domain. Residues 184 to 203 (ESSSLKPKSTTQVRRNVRQS) are compositionally biased toward polar residues. The disordered stretch occupies residues 184–211 (ESSSLKPKSTTQVRRNVRQSARSDSDSE).

In Arabidopsis thaliana (Mouse-ear cress), this protein is Thioredoxin domain-containing protein 9 homolog.